A 161-amino-acid chain; its full sequence is Dihydrofolate reductase (161 aa).

Residues 2 to 161 enclose the DHFR domain; that stretch reads NISLIAAISK…YNYSFEILSR (160 aa). A substrate-binding site is contributed by 6 to 8; the sequence is IAA. Residues 7–8 and 15–20 contribute to the NADP(+) site; these read AA and IGYKNK. Asp28 serves as a coordination point for substrate. Residue 44–47 participates in NADP(+) binding; the sequence is GRLT. Position 59 (Arg59) interacts with substrate. NADP(+) contacts are provided by residues 64-66 and 96-101; these read ISS and IGGAKI. Residue Thr115 coordinates substrate.

This sequence belongs to the dihydrofolate reductase family.

It catalyses the reaction (6S)-5,6,7,8-tetrahydrofolate + NADP(+) = 7,8-dihydrofolate + NADPH + H(+). It participates in cofactor biosynthesis; tetrahydrofolate biosynthesis; 5,6,7,8-tetrahydrofolate from 7,8-dihydrofolate: step 1/1. Key enzyme in folate metabolism. Catalyzes an essential reaction for de novo glycine and purine synthesis, and for DNA precursor synthesis. This is Dihydrofolate reductase (folA) from Buchnera aphidicola subsp. Acyrthosiphon pisum (strain APS) (Acyrthosiphon pisum symbiotic bacterium).